The chain runs to 423 residues: MTDVIDAKPEEAKKVPPEVEDEDSGDESAPEASAAGGEATKKKKKKKKPKKKKKAAEQSEPPRVGLSKLFPNGIYPEGEIQPYKDDNAYRTTSEEKRYLERITCEDPDETYQNIRKGAEVHRQVRQYAQRTIKPGMTMTEIANLIEDGTRALVEENGLEAGIGFPTGLSLNNCAAHYTPNAGDTIVLQQGDVMKVDIGVQVKGRIVDSAFTMTFEPTYDKLLEAVRAATNTGIREAGIDARLGEIAGAIQETMESYEVEVNGKLIPVKPIANLSGHSIDRYTIHAGKSVCLVKNDDQTKMEEGEYFAIETFGSTGRGRVVDGGECSHYARKVDAPHVPLRLTTAKSLLKSINKNFGTIPFCRRYLDRIGESKYLLALNHLVQQGIVEDYPPLYDQQGSMTAQFEHTILLRPTVKEVVSRGDDY.

Basic and acidic residues predominate over residues 1–17 (MTDVIDAKPEEAKKVPP). Positions 1–89 (MTDVIDAKPE…IQPYKDDNAY (89 aa)) are disordered. The segment covering 18–29 (EVEDEDSGDESA) has biased composition (acidic residues). The span at 41–54 (KKKKKKKKPKKKKK) shows a compositional bias: basic residues. A substrate-binding site is contributed by His176. A divalent metal cation is bound by residues Asp196, Asp207, and His276. A substrate-binding site is contributed by His284. The a divalent metal cation site is built by Glu309 and Glu404.

It belongs to the peptidase M24A family. Methionine aminopeptidase eukaryotic type 2 subfamily. Requires Co(2+) as cofactor. Zn(2+) serves as cofactor. The cofactor is Mn(2+). It depends on Fe(2+) as a cofactor.

The protein localises to the cytoplasm. It catalyses the reaction Release of N-terminal amino acids, preferentially methionine, from peptides and arylamides.. Functionally, cotranslationally removes the N-terminal methionine from nascent proteins. The N-terminal methionine is often cleaved when the second residue in the primary sequence is small and uncharged (Met-Ala-, Cys, Gly, Pro, Ser, Thr, or Val). The sequence is that of Methionine aminopeptidase 2 from Schizophyllum commune (strain H4-8 / FGSC 9210) (Split gill fungus).